The primary structure comprises 369 residues: MNQSDSSLMDLPLEIHLSLLEYVPNELRAVNKYFYVLHNHSYKEKSLAWIAEDNYIWAVVKHSLCLYVKSLDPLRQHAREIIQETKEPGFNVPLCMTKYIADSWYIVYNALQYPGKIINMGWDKYTKSQDSNGSDSTSNFNSRPKERTLMQSLTALPVNFWSRRKDEPTPVNVWFYVKNAHVARYIPKIITEIGICNYGPKQIVASAGYINELITSEGIYCVNLGHLPRLYDEQIFEGTGTTHLPLELKAIDRTDSDVCINGDLVLLGYDFIPYQISKPWLLFRIEPVNSIEAIFNYSECSFSYQFAWSLACLQSEEKISFPRDTIIGHGLPYKPSKLIRIFVYKHPEQKQDLGQEIALPNWNTPYLRR.

The F-box domain occupies 8–45 (LMDLPLEIHLSLLEYVPNELRAVNKYFYVLHNHSYKEK).

In terms of assembly, component of the SCF(UCC1) E3 ubiquitin-protein ligase complex composed of CDC53, SKP1, RBX1 and UCC1. Interacts with CIT2. In terms of processing, monoubiquitinated by UBC4.

Its pathway is protein modification; protein ubiquitination. Its function is as follows. Substrate recognition component of the SKP1-CUL1-F-box protein E3 ubiquitin-protein ligase complex SCF(UCC1) which mediates the ubiquitination and subsequent proteasomal degradation of target proteins. The SCF(UCC1) complex acts as a metabolic switch for the glyoxylate cycle and regulates the level of CIT2 protein to maintain citrate homeostasis. The chain is F-box protein UCC1 (UCC1) from Saccharomyces cerevisiae (strain ATCC 204508 / S288c) (Baker's yeast).